Here is a 303-residue protein sequence, read N- to C-terminus: GPN-loop GTPase 2 (303 aa).

29 to 34 contacts GTP; that stretch reads GSGKST. Positions 85 to 87 match the Gly-Pro-Asn (GPN)-loop; involved in dimer interface motif; it reads GPN. GTP is bound at residue 187 to 190; sequence SKMD.

It belongs to the GPN-loop GTPase family. As to quaternary structure, heterodimers with gpn1 or gpn3. Binds to RNA polymerase II (RNAPII).

Its function is as follows. Small GTPase required for proper localization of RNA polymerase II and III (RNAPII and RNAPIII). May act at an RNAP assembly step prior to nuclear import. In Xenopus tropicalis (Western clawed frog), this protein is GPN-loop GTPase 2.